A 302-amino-acid polypeptide reads, in one-letter code: Ribose-5-phosphate isomerase (302 aa).

The protein belongs to the ribose 5-phosphate isomerase family.

It localises to the cytoplasm. The catalysed reaction is aldehydo-D-ribose 5-phosphate = D-ribulose 5-phosphate. The protein operates within carbohydrate degradation; pentose phosphate pathway; D-ribose 5-phosphate from D-ribulose 5-phosphate (non-oxidative stage): step 1/1. The protein is Ribose-5-phosphate isomerase (RKI1) of Cryptococcus neoformans var. neoformans serotype D (strain B-3501A) (Filobasidiella neoformans).